The primary structure comprises 207 residues: Cytochrome c biogenesis ATP-binding export protein CcmA (207 aa).

An ABC transporter domain is found at 4–207 (LEVRELLCER…RISLTQTRAV (204 aa)). 36–43 (GSNGAGKT) provides a ligand contact to ATP.

The protein belongs to the ABC transporter superfamily. CcmA exporter (TC 3.A.1.107) family. The complex is composed of two ATP-binding proteins (CcmA) and two transmembrane proteins (CcmB).

The protein resides in the cell inner membrane. It carries out the reaction heme b(in) + ATP + H2O = heme b(out) + ADP + phosphate + H(+). Functionally, part of the ABC transporter complex CcmAB involved in the biogenesis of c-type cytochromes; once thought to export heme, this seems not to be the case, but its exact role is uncertain. Responsible for energy coupling to the transport system. The sequence is that of Cytochrome c biogenesis ATP-binding export protein CcmA from Escherichia coli O157:H7.